A 212-amino-acid chain; its full sequence is Imidazole glycerol phosphate synthase subunit HisH (212 aa).

Residues 4–210 (NIGIIDYGMG…LKWLHEKNSD (207 aa)) enclose the Glutamine amidotransferase type-1 domain. The Nucleophile role is filled by Cys-82. Residues His-185 and Glu-187 contribute to the active site.

In terms of assembly, heterodimer of HisH and HisF.

The protein resides in the cytoplasm. The catalysed reaction is 5-[(5-phospho-1-deoxy-D-ribulos-1-ylimino)methylamino]-1-(5-phospho-beta-D-ribosyl)imidazole-4-carboxamide + L-glutamine = D-erythro-1-(imidazol-4-yl)glycerol 3-phosphate + 5-amino-1-(5-phospho-beta-D-ribosyl)imidazole-4-carboxamide + L-glutamate + H(+). It carries out the reaction L-glutamine + H2O = L-glutamate + NH4(+). It functions in the pathway amino-acid biosynthesis; L-histidine biosynthesis; L-histidine from 5-phospho-alpha-D-ribose 1-diphosphate: step 5/9. Functionally, IGPS catalyzes the conversion of PRFAR and glutamine to IGP, AICAR and glutamate. The HisH subunit catalyzes the hydrolysis of glutamine to glutamate and ammonia as part of the synthesis of IGP and AICAR. The resulting ammonia molecule is channeled to the active site of HisF. The sequence is that of Imidazole glycerol phosphate synthase subunit HisH from Prochlorococcus marinus (strain MIT 9211).